The primary structure comprises 293 residues: MFSGSIVALVTPLDTDGEVDYNSLKSLVDYHIKAGTNGIVAVGTTGESATLSVEEHVKLVMKTLEFADGRIPVIAGTGANATHEAVTFSKLFHDSGVAGCLSVTPYYNKPTQEGLFQHYKAISEATDIPQILYNVPGRTAVDLLPETVARLAELDNIVALKDATGDLDRVAITRELCGENFIQLSGDDATALDFVKLGGHGVISVTSNIAAKDMATMFALAAQGKFEEAEIINQRLMPLHNDLFVEANPIPVKWAAHRLGMITHSDIRLPLTELSLSAQPTVEQALKSAGLLK.

Thr45 provides a ligand contact to pyruvate. Tyr133 serves as the catalytic Proton donor/acceptor. The active-site Schiff-base intermediate with substrate is the Lys161. Residue Ile203 coordinates pyruvate.

It belongs to the DapA family. Homotetramer; dimer of dimers.

Its subcellular location is the cytoplasm. It catalyses the reaction L-aspartate 4-semialdehyde + pyruvate = (2S,4S)-4-hydroxy-2,3,4,5-tetrahydrodipicolinate + H2O + H(+). It functions in the pathway amino-acid biosynthesis; L-lysine biosynthesis via DAP pathway; (S)-tetrahydrodipicolinate from L-aspartate: step 3/4. Functionally, catalyzes the condensation of (S)-aspartate-beta-semialdehyde [(S)-ASA] and pyruvate to 4-hydroxy-tetrahydrodipicolinate (HTPA). This Aliivibrio fischeri (strain ATCC 700601 / ES114) (Vibrio fischeri) protein is 4-hydroxy-tetrahydrodipicolinate synthase.